The following is a 257-amino-acid chain: Leucine-rich repeat-containing protein 3 (257 aa).

An N-terminal signal peptide occupies residues 1-32 (MGTVRPPRPSLLLVSTRESCLFLLFCLHLGAA). The LRRNT domain maps to 33–64 (CPQPCRCPDHAGAVAVFCSLRGLQEVPEDIPA). LRR repeat units lie at residues 65–86 (NTVL…AFQH), 89–110 (RLRE…TFAG), 114–135 (GLRL…ALGK), and 136–157 (LSAK…QEAL). The helical transmembrane segment at 205-225 (VAMLVTMFGWFAMVIAYVVYY) threads the bilayer.

It belongs to the LRRC3 family. As to expression, widely expressed; detected in testis, lung, small intestine, breast, brain, heart, bone marrow, placenta, colon, fetal brain, liver, fetal liver, thymus, salivary gland, spinal cord, spleen, trachea and adrenal gland.

The protein localises to the membrane. This Homo sapiens (Human) protein is Leucine-rich repeat-containing protein 3 (LRRC3).